Here is a 254-residue protein sequence, read N- to C-terminus: NAD-dependent protein deacetylase 1 (254 aa).

One can recognise a Deacetylase sirtuin-type domain in the interval 3 to 252; sequence VDFTTDELDE…PKLLDRLRGM (250 aa). Positions 29, 33, 40, 41, 105, 107, 108, and 123 each coordinate NAD(+). Nicotinamide is bound at residue F40. V107 and D108 together coordinate nicotinamide. H123 functions as the Proton acceptor in the catalytic mechanism. Zn(2+) contacts are provided by C131, C134, C154, and C157. NAD(+) is bound by residues T195, S196, and N220.

It belongs to the sirtuin family. Class U subfamily. It depends on Zn(2+) as a cofactor.

Its subcellular location is the cytoplasm. The catalysed reaction is N(6)-acetyl-L-lysyl-[protein] + NAD(+) + H2O = 2''-O-acetyl-ADP-D-ribose + nicotinamide + L-lysyl-[protein]. Its function is as follows. NAD-dependent protein deacetylase which modulates the activities of several enzymes which are inactive in their acetylated form. Deacetylates the N-terminal lysine residue of Alba, the major archaeal chromatin protein and that, in turn, increases Alba's DNA binding affinity, thereby repressing transcription. The sequence is that of NAD-dependent protein deacetylase 1 from Pyrobaculum aerophilum (strain ATCC 51768 / DSM 7523 / JCM 9630 / CIP 104966 / NBRC 100827 / IM2).